We begin with the raw amino-acid sequence, 382 residues long: Enoyl-[acyl-carrier-protein] reductase, mitochondrial (382 aa).

A mitochondrion-targeting transit peptide spans 1-17; it reads MSSFLSKRFLSFSQRAM. Residue Y77 is the Proton donor of the active site. NADP(+) contacts are provided by residues N159, 187–190, 210–212, 285–288, 310–312, and K375; these read TSSV, RDR, YGGM, and FWV.

This sequence belongs to the zinc-containing alcohol dehydrogenase family. Quinone oxidoreductase subfamily. In terms of assembly, homodimer.

The protein localises to the mitochondrion matrix. It carries out the reaction a 2,3-saturated acyl-[ACP] + NADP(+) = a (2E)-enoyl-[ACP] + NADPH + H(+). Catalyzes the NADPH-dependent reduction of trans-2-enoyl thioesters in mitochondrial fatty acid synthesis (fatty acid synthesis type II). Fatty acid chain elongation in mitochondria uses acyl carrier protein (ACP) as an acyl group carrier, but the enzyme accepts both ACP and CoA thioesters as substrates in vitro. Required for respiration and the maintenance of the mitochondrial compartment. The chain is Enoyl-[acyl-carrier-protein] reductase, mitochondrial (ETR1) from Kluyveromyces lactis (strain ATCC 8585 / CBS 2359 / DSM 70799 / NBRC 1267 / NRRL Y-1140 / WM37) (Yeast).